A 285-amino-acid polypeptide reads, in one-letter code: Probable methyltransferase ltbC (285 aa).

The segment at 1–22 (MASTGQTNNYKQGYSSQTVETQ) is disordered.

This sequence belongs to the class I-like SAM-binding methyltransferase superfamily. Monomer.

Functionally, probable methyltransferase; part of the gene cluster that mediates the biosynthesis of luteodienoside A, a glycosylated polyketide consisting of an unusual 1-O-beta-D-glucopyranosyl-myo-inositol (glucinol) ester of 3-hydroxy-2,2,4-trimethylocta-4,6-dienoic acid. The HR-PKS ltbA produces the trimethylated polyketide chain from acetyl-CoA, malonyl-CoA and S-adenosylmethionine (SAM), and the ltbA cAT domain then uses glucinol produced by the glycosyltransferase ltbB as an offloading substrate to release luteodienoside A. Since ltbA and ltbB are sufficient for the biosynthesis of luteodienoside A, the functions of the methyltransferase ltbC and the FAD-binding monooxygenase ltbD within the pathway remain obscur. The polypeptide is Probable methyltransferase ltbC (Aspergillus luteorubrus).